The chain runs to 229 residues: Peptidase E (229 aa).

Active-site charge relay system residues include S120, D135, and H157.

Belongs to the peptidase S51 family.

It is found in the cytoplasm. It carries out the reaction Dipeptidase E catalyzes the hydrolysis of dipeptides Asp-|-Xaa. It does not act on peptides with N-terminal Glu, Asn or Gln, nor does it cleave isoaspartyl peptides.. In terms of biological role, hydrolyzes dipeptides containing N-terminal aspartate residues. May play a role in allowing the cell to use peptide aspartate to spare carbon otherwise required for the synthesis of the aspartate family of amino acids. This is Peptidase E from Salmonella typhi.